A 454-amino-acid chain; its full sequence is MDEADRQLLRRCRVRLVSELQVAELWDALLSRELFTRDMIEDIQQAGSGSRRDQARQLVTDLETRGRQALPLFISCLEDTGQGTLASLLQSGRQAAKQDPEAVKPLDHLVPVVLGPMGLTAKEQRVVKLDPSQPAVGNLTPVVLGPEELWPARLKPEVLRPETPRPVDIGSGGAHDVCVPGKIRGHADMAYTLDSDPCGHCLIINNVNFCPSSGLGTRTGSNLDRDKLEHRFRWLRFMVEVKNDLTAKKMVTALMEMAHRNHRALDCFVVVILSHGCQASHLQFPGAVYGTDGCSVSIEKIVNIFNGSGCPSLGGKPKLFFIQACGGEQKDHGFEVACTSSQGRTLDSDSEPDAVPYQEGPRPLDQLDAVSSLPTPSDILVSYSTFPGFVSWRDKKSGSWYIETLDGILEQWARSEDLQSLLLRVANAVSAKGTYKQIPGCFNFLRKKLFFKTS.

In terms of domain architecture, CARD spans 1-92; it reads MDEADRQLLR…GTLASLLQSG (92 aa). Phosphothreonine; by MAPK1 is present on T163. The residue at position 191 (Y191) is a Phosphotyrosine; by ABL1. Catalysis depends on residues H275 and C325. Residues S340 and S348 each carry the phosphoserine modification. The propeptide occupies 354 to 367; sequence AVPYQEGPRPLDQL.

The protein belongs to the peptidase C14A family. In terms of assembly, heterotetramer that consists of two anti-parallel arranged heterodimers, each one formed by a 35 kDa (p35) and a 10 kDa (p10) subunit. Caspase-9 and APAF1 bind to each other via their respective NH2-terminal CED-3 homologous domains in the presence of cytochrome C and ATP. Interacts (inactive form) with EFHD2. Interacts with HAX1. Interacts with BIRC2/c-IAP1, XIAP/BIRC4, BIRC5/survivin, BIRC6/bruce and BIRC7/livin. Interacts with ABL1 (via SH3 domain); the interaction is direct and increased in the response of cells to genotoxic stress and ABL1/c-Abl activation. Interacts with BCL2L10. Post-translationally, cleavages at Asp-353 by granzyme B and at Asp-368 by caspase-3 generate the two active subunits. Caspase-8 and -10 can also be involved in these processing events. In terms of processing, phosphorylated at Thr-163 by MAPK1/ERK2. Phosphorylation at Thr-163 is sufficient to block caspase-9 processing and subsequent caspase-3 activation. Phosphorylation on Tyr-191 by ABL1/c-Abl; occurs in the response of cells to DNA damage. Ubiquitinated by BIRC6; this activity is inhibited by DIABLO/SMAC.

The enzyme catalyses Strict requirement for an Asp residue at position P1 and with a marked preference for His at position P2. It has a preferred cleavage sequence of Leu-Gly-His-Asp-|-Xaa.. Inhibited by BIRC6; following inhibition of BIRC6-caspase binding by DIABLO/SMAC, BIRC6 is subjected to caspase cleavage, leading to an increase in active caspases. Involved in the activation cascade of caspases responsible for apoptosis execution. Binding of caspase-9 to Apaf-1 leads to activation of the protease which then cleaves and activates effector caspases caspase-3 (CASP3) or caspase-7 (CASP7). Promotes DNA damage-induced apoptosis in a ABL1/c-Abl-dependent manner. Proteolytically cleaves poly(ADP-ribose) polymerase (PARP). Cleaves BIRC6 following inhibition of BIRC6-caspase binding by DIABLO/SMAC. The protein is Caspase-9 (Casp9) of Mus musculus (Mouse).